Here is a 204-residue protein sequence, read N- to C-terminus: MSVIEKLIKPAHLIDMRDIIREGNPTLRAVAEEVSFPLADEDILLGEKMMQFLHNSQDPVMAEKLGLRGGVGLAAPQLDISRRIIAVLLPNPEDENGNSPQEAYALKEVMYNPKIVAHSVQDAALADGEGCLSVDRDVPGYVVRHARVTVDYFDKNGEKHRVKLKGYKAIVVQHEIDHINGIMFYDRINETDPFAIKEGMLILE.

Fe cation-binding residues include cysteine 131 and histidine 174. The active site involves glutamate 175. Residue histidine 178 coordinates Fe cation.

This sequence belongs to the polypeptide deformylase family. Fe(2+) is required as a cofactor.

It catalyses the reaction N-terminal N-formyl-L-methionyl-[peptide] + H2O = N-terminal L-methionyl-[peptide] + formate. Functionally, removes the formyl group from the N-terminal Met of newly synthesized proteins. Requires at least a dipeptide for an efficient rate of reaction. N-terminal L-methionine is a prerequisite for activity but the enzyme has broad specificity at other positions. In Streptococcus gordonii (strain Challis / ATCC 35105 / BCRC 15272 / CH1 / DL1 / V288), this protein is Peptide deformylase.